A 247-amino-acid chain; its full sequence is Thioredoxin reductase-like selenoprotein T homolog selt-1.1 (247 aa).

An N-terminal signal peptide occupies residues M1 to A26. The cysteines at positions 92 and 95 are disulfide-linked.

The protein belongs to the SelWTH family. SELT subfamily. As to expression, broadly expressed in neurons of nervous system including ADL, ASH, ASI, ASJ, ASK and AWB amphid sensilla neurons, in epithelial cells including hypodermal, arcade, pharyngeal, vulval and rectal cells, and in somatic muscle cells of the head, neck and body wall, and non-striated pharyngeal muscles.

It is found in the endoplasmic reticulum. It catalyses the reaction [thioredoxin]-dithiol + NADP(+) = [thioredoxin]-disulfide + NADPH + H(+). Its function is as follows. Probably has thioredoxin reductase-like oxidoreductase activity. Plays a role in regulating the oxidative stress response, and odorant and pathogenic bacteria avoidance behavior. The protein is Thioredoxin reductase-like selenoprotein T homolog selt-1.1 of Caenorhabditis elegans.